The primary structure comprises 1200 residues: Hyalin (1200 aa).

HYR domains follow at residues 1-39, 40-123, 124-207, 208-292, 293-376, 377-460, 461-544, 546-629, 630-713, 714-797, 798-881, 882-966, 967-1050, 1051-1133, and 1134-1200; these read SSHN…TVTA, TDTT…NVIE, VDTT…NVIE, VDTT…NVVE, VDTT…TVEE, VDTT…TVIA, VDTT…TISA, VDTT…VINA, VDTT…TIGT, VDTM…TVFA, VDTT…TVTA, QDTT…TVNT, and QDTT…FFSD.

As to quaternary structure, homooligomer in presence of calcium. Glycosylated.

It localises to the secreted. The protein localises to the extracellular space. Its subcellular location is the extracellular matrix. Functionally, major constituent of the hyaline layer. The hyaline layer of echinoderm embryos is an extraembryonic matrix that functions as a substrate for cell adhesion through early development. The polypeptide is Hyalin (Strongylocentrotus purpuratus (Purple sea urchin)).